Consider the following 236-residue polypeptide: Phosphoribosylaminoimidazole-succinocarboxamide synthase (236 aa).

This sequence belongs to the SAICAR synthetase family.

It carries out the reaction 5-amino-1-(5-phospho-D-ribosyl)imidazole-4-carboxylate + L-aspartate + ATP = (2S)-2-[5-amino-1-(5-phospho-beta-D-ribosyl)imidazole-4-carboxamido]succinate + ADP + phosphate + 2 H(+). It functions in the pathway purine metabolism; IMP biosynthesis via de novo pathway; 5-amino-1-(5-phospho-D-ribosyl)imidazole-4-carboxamide from 5-amino-1-(5-phospho-D-ribosyl)imidazole-4-carboxylate: step 1/2. This chain is Phosphoribosylaminoimidazole-succinocarboxamide synthase, found in Campylobacter jejuni subsp. doylei (strain ATCC BAA-1458 / RM4099 / 269.97).